A 486-amino-acid polypeptide reads, in one-letter code: Cardiolipin synthase A (486 aa).

The next 2 membrane-spanning stretches (helical) occupy residues 3-23 (TFYT…IAGV) and 38-58 (MAWL…YLSF). PLD phosphodiesterase domains follow at residues 219 to 246 (MDLR…VDPR) and 399 to 426 (EGGL…DMRS). Residues histidine 224, lysine 226, aspartate 231, histidine 404, lysine 406, and aspartate 411 contribute to the active site.

Belongs to the phospholipase D family. Cardiolipin synthase subfamily. ClsA sub-subfamily.

It localises to the cell inner membrane. The catalysed reaction is 2 a 1,2-diacyl-sn-glycero-3-phospho-(1'-sn-glycerol) = a cardiolipin + glycerol. In terms of biological role, catalyzes the reversible phosphatidyl group transfer from one phosphatidylglycerol molecule to another to form cardiolipin (CL) (diphosphatidylglycerol) and glycerol. This is Cardiolipin synthase A from Yersinia pseudotuberculosis serotype O:1b (strain IP 31758).